The chain runs to 640 residues: Uromodulin (640 aa).

The N-terminal stretch at 1–24 is a signal peptide; sequence MGQPSLTWMLMVVVASWFITTAAT. In terms of domain architecture, EGF-like 1 spans 28–64; that stretch reads EARWCSECHSNATCTEDEAVTTCTCQEGFTGDGLTCV. Cystine bridges form between cysteine 32-cysteine 41, cysteine 35-cysteine 50, cysteine 52-cysteine 63, cysteine 69-cysteine 83, cysteine 77-cysteine 92, cysteine 94-cysteine 106, cysteine 112-cysteine 126, cysteine 120-cysteine 135, cysteine 137-cysteine 148, cysteine 150-cysteine 161, cysteine 155-cysteine 170, cysteine 174-cysteine 267, cysteine 195-cysteine 282, cysteine 217-cysteine 255, cysteine 223-cysteine 287, cysteine 248-cysteine 256, cysteine 297-cysteine 306, cysteine 300-cysteine 315, cysteine 317-cysteine 347, cysteine 335-cysteine 425, and cysteine 366-cysteine 389. N-linked (GlcNAc...) asparagine glycosylation occurs at asparagine 38. Positions 65–107 constitute an EGF-like 2; calcium-binding domain; the sequence is DLDECAIPGAHNCSANSSCVNTPGSFSCVCPEGFRLSPGLGCT. Residues asparagine 76 and asparagine 80 are each glycosylated (N-linked (GlcNAc...) asparagine). The 42-residue stretch at 108-149 folds into the EGF-like 3; calcium-binding domain; sequence DVDECAEPGLSHCHALATCVNVVGSYLCVCPAGYRGDGWHCE. The beta hairpin stretch occupies residues 150–171; the sequence is CSPGSCGPGLDCVPEGDALVCA. The segment at 172–291 is D10C; that stretch reads DPCQAHRTLD…CHLAYCTDPS (120 aa). An N-linked (GlcNAc...) (complex) asparagine glycan is attached at asparagine 232. N-linked (GlcNAc...) (high mannose) asparagine glycosylation is present at asparagine 275. Residues 292–323 form the EGF-like 4 domain; the sequence is SVEGTCEECSIDEDCKSNNGRWHCQCKQDFNI. The N-linked (GlcNAc...) (complex) asparagine glycan is linked to asparagine 322. Positions 334 to 429 are ZP-N; the sequence is ECGANDMKVS…KINFACSYPL (96 aa). In terms of domain architecture, ZP spans 334 to 589; the sequence is ECGANDMKVS…PTCSGTRFRS (256 aa). N-linked (GlcNAc...) (complex) asparagine glycosylation is present at asparagine 396. The tract at residues 430–453 is flexible ZP-N/ZP-C linker; important for secretion and polymerization into filaments; it reads DMKVSLKTALQPMVSALNIRVGGT. The segment at 454–465 is internal hydrophobic patch (IHP); it reads GMFTVRMALFQT. The ZP-C stretch occupies residues 454-589; that stretch reads GMFTVRMALF…PTCSGTRFRS (136 aa). Disulfide bonds link cysteine 506–cysteine 566, cysteine 527–cysteine 582, and cysteine 571–cysteine 578. Asparagine 513 is a glycosylation site (N-linked (GlcNAc...) (complex) asparagine; alternate). An N-linked (GlcNAc...) (high mannose) asparagine; alternate glycan is attached at asparagine 513. The tract at residues 586 to 589 is essential for cleavage by HPN; sequence RFRS. The interval 598-606 is external hydrophobic patch (EHP); regulates polymerization into filaments; sequence VLNLGPITR. Serine 614 is lipidated: GPI-anchor amidated serine. A propeptide spans 615–640 (removed in mature form); sequence RAFSSLGLLKVWLPLLLSATLTLTFQ.

In terms of assembly, homodimer that then polymerizes into long filaments. The filaments can additionally assemble laterally to form a sheet. The filaments consist of a zigzag-shaped backbone with laterally protruding arms which interact with bacterial adhesin fimH. Two fimH molecules can bind to a single UMOD monomer. In terms of processing, N-glycosylated. N-glycan heterogeneity at Asn-232: Hex7HexNAc6 (major) and dHex1Hex7HexNAc6 (minor); at Asn-322: dHex1Hex6HexNAc5 (minor), dHex1Hex7HexNAc6 (major) and dHex1Hex8HexNAc7 (minor); at Asn-396: Hex6HexNAc5 (major), dHex1Hex6HexNAc5 (minor) and Hex7HexNAc6 (minor). Glycosylated Asn-232 interacts with E.coli adhesin fimH. Other complex glycosylation sites may serve as binding sites for proteins from other bacteria inclduding K.pneumoniae, P.aeruginosa and S.mitis. Post-translationally, proteolytically cleaved at a conserved C-terminal proteolytic cleavage site to generate the secreted form found in urine. This cleavage is catalyzed by HPN. In terms of tissue distribution, expressed in the tubular cells of the kidney. Most abundant protein in normal urine (at protein level). Synthesized exclusively in the kidney. Expressed exclusively by epithelial cells of the thick ascending limb of Henle's loop (TALH) and of distal convoluted tubule lumen.

It is found in the apical cell membrane. The protein localises to the basolateral cell membrane. The protein resides in the cell projection. Its subcellular location is the cilium membrane. It localises to the secreted. Functions in biogenesis and organization of the apical membrane of epithelial cells of the thick ascending limb of Henle's loop (TALH), where it promotes formation of complex filamentous gel-like structure that may play a role in the water barrier permeability. May serve as a receptor for binding and endocytosis of cytokines (IL-1, IL-2) and TNF. Facilitates neutrophil migration across renal epithelia. Its function is as follows. In the urine, may contribute to colloid osmotic pressure, retards passage of positively charged electrolytes, and inhibits formation of liquid containing supersaturated salts and subsequent formation of salt crystals. Protects against urinary tract infections by binding to type 1 fimbriated E.coli. Binds to bacterial adhesin fimH which mediates the stable formation of bacterial aggregates, prevents the binding of E.coli to uroplakins UPK1A and UPK1B which act as urothelial receptors for type I fimbriae, and allows for pathogen clearance through micturation. Also promotes aggregation of other bacteria including K.pneumoniae, P.aeruginosa and S.mitis and so may also protect against other uropathogens. The chain is Uromodulin (UMOD) from Homo sapiens (Human).